The sequence spans 516 residues: D-alanine--D-alanyl carrier protein ligase (516 aa).

Residue 156-157 (TS) coordinates ATP. Asp-203 contacts D-alanine. 298–303 (NAYGPT) provides a ligand contact to ATP. Residue Val-307 participates in D-alanine binding. ATP contacts are provided by residues Asp-389, 401-404 (YGGR), and Lys-503. D-alanine is bound at residue Lys-503.

Belongs to the ATP-dependent AMP-binding enzyme family. DltA subfamily.

The protein resides in the cytoplasm. It carries out the reaction holo-[D-alanyl-carrier protein] + D-alanine + ATP = D-alanyl-[D-alanyl-carrier protein] + AMP + diphosphate. It functions in the pathway cell wall biogenesis; lipoteichoic acid biosynthesis. Functionally, catalyzes the first step in the D-alanylation of lipoteichoic acid (LTA), the activation of D-alanine and its transfer onto the D-alanyl carrier protein (Dcp) DltC. In an ATP-dependent two-step reaction, forms a high energy D-alanyl-AMP intermediate, followed by transfer of the D-alanyl residue as a thiol ester to the phosphopantheinyl prosthetic group of the Dcp. D-alanylation of LTA plays an important role in modulating the properties of the cell wall in Gram-positive bacteria, influencing the net charge of the cell wall. The chain is D-alanine--D-alanyl carrier protein ligase from Streptococcus pneumoniae (strain ATCC 700669 / Spain 23F-1).